Consider the following 192-residue polypeptide: uncharacterized protein (192 aa).

The chain crosses the membrane as a helical; Signal-anchor span at residues 7-29 (FIHSISGGSSLLSASEVFASAFF). A helical transmembrane segment spans residues 51–67 (YFLCVLVSTFLNSLVII).

The protein localises to the membrane. This is an uncharacterized protein from Saccharomyces cerevisiae (strain ATCC 204508 / S288c) (Baker's yeast).